The primary structure comprises 579 residues: Vacuolar protein 8 (579 aa).

The N-myristoyl glycine moiety is linked to residue Gly2. 3 S-palmitoyl cysteine lipidation sites follow: Cys4, Cys5, and Cys7. 9 ARM repeats span residues 39 to 76 (NKDQ…FAEI), 77 to 116 (TEKY…NLAV), 118 to 157 (NENK…NLAT), 159 to 198 (DDNK…NMTH), 200 to 239 (GENR…NIAV), 241 to 282 (ESNR…NLAS), 284 to 323 (TNYQ…NISI), 325 to 365 (PLNE…NLAA), and 409 to 448 (DNTK…NLIS). Residues 534–556 (QDTNIDHNGNSNNIEGNGRSNKQ) show a composition bias toward polar residues. Positions 534–560 (QDTNIDHNGNSNNIEGNGRSNKQSSEK) are disordered.

The protein belongs to the beta-catenin family.

Its subcellular location is the vacuole membrane. Its function is as follows. Functions in both vacuole inheritance and protein targeting from the cytoplasm to vacuole. The chain is Vacuolar protein 8 (VAC8) from Kluyveromyces lactis (strain ATCC 8585 / CBS 2359 / DSM 70799 / NBRC 1267 / NRRL Y-1140 / WM37) (Yeast).